The chain runs to 432 residues: MVRCLWAAECCWLPPKRKQPFEDTMYTTYVARQPILNAKRHTLGYELLFRDGEKNAFPEYMDADRATYRLIVENFLSLGTNPRIARSRCFINFPHKSLIRRLPLTLPREQIVVEILETCQPTDDLFEAVQELSQRGYLLALDDFVYSPAWERFLPYVQIVKIDIMAMGLDKACEFVRGRLAQGSRRRFLAERVETEDEFHQARHAGFTFFQGYFFSKPEIIKQRYVSPEHVIAMQLFREVCQPEVDYVRVERLVAQDIALSYKLLRFVNTMSDRISVSISSFRQALVYLGQDKLRIFVSLAVASYISSKKPKELYNLSLQRAQFCQLMATHTHFKAHREQAFLIGMFSVLDALLDTSIEQLVEQLPLADDVKLALREREGPLGTLLDLEECFEKADWQGVEQHCLELGFDLEDVRQELIEAQRWSQDINRLI.

Residues 1-232 (MVRCLWAAEC…QRYVSPEHVI (232 aa)) form the EAL domain. Residues 226 to 413 (VSPEHVIAMQ…CLELGFDLED (188 aa)) enclose the HDOD domain.

It catalyses the reaction 3',3'-c-di-GMP + H2O = 5'-phosphoguanylyl(3'-&gt;5')guanosine + H(+). In terms of biological role, phosphodiesterase (PDE) that catalyzes the hydrolysis of cyclic diguanylate (c-di-GMP). Positively regulates motility and negatively regulates biofilm formation. The protein is Cyclic di-GMP phosphodiesterase CdgJ of Vibrio cholerae serotype O1 (strain ATCC 39315 / El Tor Inaba N16961).